A 466-amino-acid polypeptide reads, in one-letter code: Citrate synthase, mitochondrial (466 aa).

Residues 1-27 constitute a mitochondrion transit peptide; that stretch reads MALLTAAARLLGTKNASCLVLAARHAS. Positions 2-21 match the SIFI-degron motif; sequence ALLTAAARLLGTKNASCLVL. Residue K57 is modified to N6-succinyllysine. K76 bears the N6-acetyllysine; alternate mark. The residue at position 76 (K76) is an N6-succinyllysine; alternate. 2 positions are modified to N6-succinyllysine: K103 and K193. H301 is a catalytic residue. 2 positions are modified to N6-acetyllysine; alternate: K321 and K327. N6-succinyllysine; alternate occurs at positions 321 and 327. The active site involves H347. Oxaloacetate is bound at residue R356. N6-acetyllysine; alternate is present on K375. K375 carries the N6-succinyllysine; alternate modification. K382 carries the N6-acetyllysine modification. K393 carries the N6-acetyllysine; alternate modification. K393 is subject to N6-succinyllysine; alternate. K395 carries the N6,N6,N6-trimethyllysine modification. The active site involves D402. 2 residues coordinate oxaloacetate: R428 and R448. K450 carries the post-translational modification N6-succinyllysine. Position 459 is an N6-acetyllysine; alternate (K459). Position 459 is an N6-succinyllysine; alternate (K459).

This sequence belongs to the citrate synthase family. In terms of assembly, homodimer. In terms of processing, methylated. Trimethylation at Lys-395 by CSKMT decreases citrate synthase activity. Post-translationally, in response to mitochondrial stress, the precursor protein is ubiquitinated by the SIFI complex in the cytoplasm before mitochondrial import, leading to its degradation. Within the SIFI complex, UBR4 initiates ubiquitin chain that are further elongated or branched by KCMF1.

It localises to the mitochondrion matrix. It carries out the reaction oxaloacetate + acetyl-CoA + H2O = citrate + CoA + H(+). Its pathway is carbohydrate metabolism; tricarboxylic acid cycle; isocitrate from oxaloacetate: step 1/2. In terms of biological role, key enzyme of the Krebs tricarboxylic acid cycle which catalyzes the synthesis of citrate from acetyl coenzyme A and oxaloacetate. In Macaca fascicularis (Crab-eating macaque), this protein is Citrate synthase, mitochondrial (CS).